A 186-amino-acid polypeptide reads, in one-letter code: MNKFLFAAALIVSGLLVGCNQLTQYTITEQEINQSLAKHNNFSKDIGLPGVADAHIVLTNLTSQIGREEPNKVTLTGDANLDMNSLFGSQKATMKLKLKALPVFDKEKGAIFLKEMEVVDATVQPEKMQTVMQTLLPYLNQALRNYFNQQPAYVLREDGSQGEAMAKKLAKGIEVKPGEIVIPFTD.

The first 18 residues, 1–18, serve as a signal peptide directing secretion; that stretch reads MNKFLFAAALIVSGLLVG. A lipid anchor (N-palmitoyl cysteine) is attached at Cys19. Cys19 carries S-diacylglycerol cysteine lipidation.

It is found in the cell membrane. This is an uncharacterized protein from Escherichia coli (strain K12).